Consider the following 466-residue polypeptide: Methylenetetrahydrofolate--tRNA-(uracil-5-)-methyltransferase TrmFO (466 aa).

An FAD-binding site is contributed by 16–21 (GGGMAG).

It belongs to the MnmG family. TrmFO subfamily. The cofactor is FAD.

It localises to the cytoplasm. It carries out the reaction uridine(54) in tRNA + (6R)-5,10-methylene-5,6,7,8-tetrahydrofolate + NADH + H(+) = 5-methyluridine(54) in tRNA + (6S)-5,6,7,8-tetrahydrofolate + NAD(+). It catalyses the reaction uridine(54) in tRNA + (6R)-5,10-methylene-5,6,7,8-tetrahydrofolate + NADPH + H(+) = 5-methyluridine(54) in tRNA + (6S)-5,6,7,8-tetrahydrofolate + NADP(+). In terms of biological role, catalyzes the folate-dependent formation of 5-methyl-uridine at position 54 (M-5-U54) in all tRNAs. The sequence is that of Methylenetetrahydrofolate--tRNA-(uracil-5-)-methyltransferase TrmFO from Maricaulis maris (strain MCS10) (Caulobacter maris).